A 432-amino-acid polypeptide reads, in one-letter code: Trigger factor (432 aa).

A PPIase FKBP-type domain is found at 163–248; sequence GDIAVIDFEG…LKALNKKELP (86 aa).

This sequence belongs to the FKBP-type PPIase family. Tig subfamily.

The protein resides in the cytoplasm. It carries out the reaction [protein]-peptidylproline (omega=180) = [protein]-peptidylproline (omega=0). In terms of biological role, involved in protein export. Acts as a chaperone by maintaining the newly synthesized protein in an open conformation. Functions as a peptidyl-prolyl cis-trans isomerase. This chain is Trigger factor, found in Caldanaerobacter subterraneus subsp. tengcongensis (strain DSM 15242 / JCM 11007 / NBRC 100824 / MB4) (Thermoanaerobacter tengcongensis).